A 452-amino-acid polypeptide reads, in one-letter code: MKETIVAQATPIGRGGVGILRVSGPLAQQVAQEILGKTLTPRLAHYLPFKDNDGEILDQGIALFFKAPNSFTGEDVLELQGHGGQVILDLLLKRILTINGIRIARTGEFSEQAFLNDKLDLAQAEAIADLIDATSEQAARSALKSLQGEFSNKINQLVDQVIYLRTYVEAAIDFPDEEIDFLADGKIERHLNDIIHQLAAVRQEAKQGSILREGMKAVIAGRPNAGKSSLLNALAGREAAIVTNIAGTTRDVLHEHIHLDGMPLHIIDTAGLREASDEVEKIGIQRAWNEIVAADHVLLMLDSTEQSAYAFKTEWAEFLAKLPPKMPITIIRNKVDLSGEVEGLTQLDGFTLIRLSAQTKIGVDVLREHLKTSMGYQSSTEGGFLARRRHLQALETAAKHLTQGHIQLTQFFAGELLAEELRLVQNTLSEITGQFTSDDLLGNIFSSFCIGK.

Arginine 21, glutamate 78, and lysine 118 together coordinate (6S)-5-formyl-5,6,7,8-tetrahydrofolate. In terms of domain architecture, TrmE-type G spans 214-375 (GMKAVIAGRP…LREHLKTSMG (162 aa)). Asparagine 224 lines the K(+) pocket. GTP is bound by residues 224 to 229 (NAGKSS), 243 to 249 (TNIAGTT), and 268 to 271 (DTAG). Serine 228 is a Mg(2+) binding site. K(+) is bound by residues threonine 243, isoleucine 245, and threonine 248. Threonine 249 provides a ligand contact to Mg(2+). A (6S)-5-formyl-5,6,7,8-tetrahydrofolate-binding site is contributed by lysine 452.

The protein belongs to the TRAFAC class TrmE-Era-EngA-EngB-Septin-like GTPase superfamily. TrmE GTPase family. As to quaternary structure, homodimer. Heterotetramer of two MnmE and two MnmG subunits. The cofactor is K(+).

The protein localises to the cytoplasm. Exhibits a very high intrinsic GTPase hydrolysis rate. Involved in the addition of a carboxymethylaminomethyl (cmnm) group at the wobble position (U34) of certain tRNAs, forming tRNA-cmnm(5)s(2)U34. This Haemophilus ducreyi (strain 35000HP / ATCC 700724) protein is tRNA modification GTPase MnmE.